Consider the following 839-residue polypeptide: MAIGITACVLSLINYQGLAYSAALINEPIQACVIAREVDLTDDIRTKFAQCLGWQADQSSPVCLGFYKPITVTPLASPDEVRILADTASFYRTQRSTLSGHVEMQQGQRVVNAQTAYVYRDPKTNEVTKIEFLNHVRYLEPDRMMIARKAVVYPQDKSGEVEDVLYRFNTNRSNALLPAWGRASLIKRFANQDYFLKEATYTTCAPQDKAWAIEAESISIDNEKGKGIARNAKLRIHEWPVLYTPYLSFPTNRDRKSGFLMPIVGYSNVGGADLGIPYYWNMAPNYDMTLVPHLYTKRGLMLGGQFRYLTSKSTGTFNGNFLPKDKAFGRFLQDNEVEFPQIRGLSTNRWEVNFVDSTQFLSDLQLNVNFQQVSDDYYLQDFSTNLASVTQRQLLRQADLTYTTENWTFRGMGQSYQTLHPINEIPVSPVYERLPQLMARGYYDDLPFNANFNILGQYDQFHWPNDSWNIALNNMPQGPRFHLNPILSVPMMKPWGYVTPSVQFVENYYDISRNYTWGTSRANYNLTIPRYSLDGGLYFERDLHLKGTYYIQTLEPRLFYLRVPYYNQTLIPVYDSGFMIFNVDQLFRTNRFSGFDRIGDANQLSYALTTRWLEDESGAEKANFSIGQIKYFSERRVQLCQSPTGFCTDNPDTFGNLSSTFGTSPVASRAVYKFNPAWGITGDYIWDPATRATNNADLNLHYQPARNAIINGGYSYLVNGDVTQVRNNDTENNALHQAILSAAWPLSEKWSGIGAYSYNISKNYSMMSFLGVQYDSCCWAMRILGGRTFRSLNEEFEPRYNNNIYLQILLKGLGSVASSDPSGILNTYIPGYYDPFRRR.

Residues 1 to 21 (MAIGITACVLSLINYQGLAYS) form the signal peptide.

Belongs to the LptD family. As to quaternary structure, component of the lipopolysaccharide transport and assembly complex. Interacts with LptE and LptA.

It localises to the cell outer membrane. Its function is as follows. Together with LptE, is involved in the assembly of lipopolysaccharide (LPS) at the surface of the outer membrane. The chain is LPS-assembly protein LptD from Legionella pneumophila (strain Paris).